Consider the following 179-residue polypeptide: Cytoglobin-2 (179 aa).

In terms of domain architecture, Globin spans 18 to 167 (PLSDAEMEII…VYWHVTGAYT (150 aa)). The heme b site is built by H81 and H113.

Belongs to the globin family. As to quaternary structure, monomeric.

It localises to the cytoplasm. Its subcellular location is the nucleus. It catalyses the reaction Fe(II)-heme b-[protein] + nitric oxide + O2 = Fe(III)-heme b-[protein] + nitrate. The catalysed reaction is Fe(III)-heme b-[protein] + nitric oxide + H2O = Fe(II)-heme b-[protein] + nitrite + 2 H(+). The enzyme catalyses 2 superoxide + 2 H(+) = H2O2 + O2. It carries out the reaction H2O2 + AH2 = A + 2 H2O. Functionally, probable multifunctional globin with a hexacoordinated heme iron required for the catalysis of various reactions depending on redox condition of the cell as well as oxygen availability. Has a nitric oxide dioxygenase (NOD) activity and is most probably involved in cell-mediated and oxygen-dependent nitric oxide consumption. Under normoxic conditions functions as a nitric oxide dioxygenase (NOD) but under hypoxic conditions the globin may switch its function to that of a nitrite (NO2) reductase (NiR), generating nitric oxide. Could also have peroxidase and superoxide dismutase activities, detoxifying reactive oxygen species and protecting cells against oxidative stress. Also binds dioxygen with low affinity and could function as an oxygen sensor but has probably no function as a respiratory oxygen carrier. The protein is Cytoglobin-2 of Oryzias latipes (Japanese rice fish).